Consider the following 131-residue polypeptide: Small ribosomal subunit protein uS11 (131 aa).

The protein belongs to the universal ribosomal protein uS11 family. In terms of assembly, part of the 30S ribosomal subunit. Interacts with proteins S7 and S18. Binds to IF-3.

Located on the platform of the 30S subunit, it bridges several disparate RNA helices of the 16S rRNA. Forms part of the Shine-Dalgarno cleft in the 70S ribosome. The protein is Small ribosomal subunit protein uS11 of Halorhodospira halophila (strain DSM 244 / SL1) (Ectothiorhodospira halophila (strain DSM 244 / SL1)).